Here is a 145-residue protein sequence, read N- to C-terminus: UPF0310 protein PH1033 (145 aa).

The protein belongs to the UPF0310 family.

The chain is UPF0310 protein PH1033 from Pyrococcus horikoshii (strain ATCC 700860 / DSM 12428 / JCM 9974 / NBRC 100139 / OT-3).